A 197-amino-acid polypeptide reads, in one-letter code: Cell division protein SepF (197 aa).

Positions 15-91 (DEEEVESPEE…PPSKSNGKNV (77 aa)) are disordered. The span at 22-31 (PEERQRRVVQ) shows a compositional bias: basic and acidic residues. Positions 37–47 (TNNVQQNQPQQ) are enriched in low complexity. Composition is skewed to polar residues over residues 48-58 (SERSYSNQSKL) and 78-91 (RMNQPPSKSNGKNV).

It belongs to the SepF family. Homodimer. Interacts with FtsZ.

The protein resides in the cytoplasm. Its function is as follows. Cell division protein that is part of the divisome complex and is recruited early to the Z-ring. Probably stimulates Z-ring formation, perhaps through the cross-linking of FtsZ protofilaments. Its function overlaps with FtsA. This Staphylococcus haemolyticus (strain JCSC1435) protein is Cell division protein SepF.